Reading from the N-terminus, the 347-residue chain is NADH-ubiquinone oxidoreductase chain 2 (347 aa).

10 helical membrane passes run 4–21 (LILS…LIVM), 26–45 (WLMV…PVLM), 59–79 (YFLT…INLI), 96–116 (IIMT…FWVP), 122–142 (IQLS…MSIL), 148–168 (AINM…GGWG), 201–221 (ALLN…TFML), 242–262 (TTIL…GFLP), 274–294 (DSII…YFYM), and 326–346 (LPPL…LMLL).

Belongs to the complex I subunit 2 family. As to quaternary structure, core subunit of respiratory chain NADH dehydrogenase (Complex I) which is composed of 45 different subunits. Interacts with TMEM242.

The protein localises to the mitochondrion inner membrane. The catalysed reaction is a ubiquinone + NADH + 5 H(+)(in) = a ubiquinol + NAD(+) + 4 H(+)(out). Functionally, core subunit of the mitochondrial membrane respiratory chain NADH dehydrogenase (Complex I) which catalyzes electron transfer from NADH through the respiratory chain, using ubiquinone as an electron acceptor. Essential for the catalytic activity and assembly of complex I. The chain is NADH-ubiquinone oxidoreductase chain 2 from Syconycteris australis (Southern blossom bat).